The sequence spans 1038 residues: Translation initiation factor IF-2 (1038 aa).

A disordered region spans residues 48 to 426; the sequence is DALQGPGGNA…RQRRQEYEAM (379 aa). Residues 58–87 show a composition bias toward low complexity; it reads GKSAAKPGAPRKAAPAKPAAPSPAAAARPA. Pro residues predominate over residues 88-99; it reads APKPGAPAPKPA. The segment covering 100 to 114 has biased composition (low complexity); sequence EAPSSTPAAPSAPSA. The span at 115–125 shows a compositional bias: pro residues; the sequence is GPRPGPKPAPK. Residues 126-141 are compositionally biased toward low complexity; that stretch reads AAPVTPVPAAEFSAPA. Over residues 142–153 the composition is skewed to pro residues; it reads PAQPAAPQPQAP. Over residues 177–199 the composition is skewed to basic and acidic residues; sequence DGGRDGGQRDGGRGGERGGDRPA. A compositionally biased stretch (low complexity) spans 200–219; sequence RPAGQGAPRPGGARPAGPRP. Residues 261–277 are compositionally biased toward gly residues; sequence SGPGGAPRPQGGQGQGG. Positions 299–315 are enriched in low complexity; sequence GNRPNPGMMPQRPAAGP. Residues 319–406 are compositionally biased toward gly residues; that stretch reads PGGGGRGPGG…GTQGAFGRPG (88 aa). A compositionally biased stretch (basic residues) spans 410-419; that stretch reads RRGRKSKRQR. Residues 531–703 enclose the tr-type G domain; it reads SRPPVVTVMG…VVLTADASLD (173 aa). The G1 stretch occupies residues 540–547; it reads GHVDHGKT. A GTP-binding site is contributed by 540–547; the sequence is GHVDHGKT. The G2 stretch occupies residues 565-569; sequence GITQH. The segment at 590–593 is G3; that stretch reads DTPG. Residues 590–594 and 644–647 each bind GTP; these read DTPGH and NKID. The interval 644-647 is G4; sequence NKID. The interval 680-682 is G5; sequence SAK.

It belongs to the TRAFAC class translation factor GTPase superfamily. Classic translation factor GTPase family. IF-2 subfamily.

It is found in the cytoplasm. Functionally, one of the essential components for the initiation of protein synthesis. Protects formylmethionyl-tRNA from spontaneous hydrolysis and promotes its binding to the 30S ribosomal subunits. Also involved in the hydrolysis of GTP during the formation of the 70S ribosomal complex. The protein is Translation initiation factor IF-2 of Streptomyces griseus subsp. griseus (strain JCM 4626 / CBS 651.72 / NBRC 13350 / KCC S-0626 / ISP 5235).